A 185-amino-acid polypeptide reads, in one-letter code: Ribosome-recycling factor (185 aa).

Belongs to the RRF family.

The protein resides in the cytoplasm. Functionally, responsible for the release of ribosomes from messenger RNA at the termination of protein biosynthesis. May increase the efficiency of translation by recycling ribosomes from one round of translation to another. This is Ribosome-recycling factor from Corynebacterium efficiens (strain DSM 44549 / YS-314 / AJ 12310 / JCM 11189 / NBRC 100395).